The sequence spans 199 residues: Large ribosomal subunit protein mL51 (199 aa).

The transit peptide at Met-1–Thr-15 directs the protein to the mitochondrion.

Belongs to the mitochondrion-specific ribosomal protein mL51 family. In terms of assembly, component of the mitochondrial ribosome large subunit (39S) which comprises a 16S rRNA and about 50 distinct proteins.

Its subcellular location is the mitochondrion. This Caenorhabditis elegans protein is Large ribosomal subunit protein mL51 (mrpl-51).